Here is a 505-residue protein sequence, read N- to C-terminus: Trans-cinnamate 4-monooxygenase (505 aa).

Residues 3 to 23 (LLLLEKSLIAVFVAVILATVI) form a helical membrane-spanning segment. Residues 213 to 218 (RSRLAQ) and A306 contribute to the (E)-cinnamate site. C447 provides a ligand contact to heme.

The protein belongs to the cytochrome P450 family. Heme serves as cofactor. In terms of tissue distribution, expressed in roots, leaves, stems, flowers and siliques.

The protein resides in the membrane. The catalysed reaction is (E)-cinnamate + reduced [NADPH--hemoprotein reductase] + O2 = (E)-4-coumarate + oxidized [NADPH--hemoprotein reductase] + H2O + H(+). Its pathway is phenylpropanoid metabolism; trans-4-coumarate biosynthesis; trans-4-coumarate from trans-cinnamate: step 1/1. Catalyzes the first oxidative step of the phenylpropanoid pathway in higher plants by transforming trans-cinnamate into p-coumarate. The compounds formed by this pathway are essential components for lignification, pollination, and defense against ultraviolet light, predators and pathogens. The protein is Trans-cinnamate 4-monooxygenase of Arabidopsis thaliana (Mouse-ear cress).